A 209-amino-acid polypeptide reads, in one-letter code: GTP cyclohydrolase-2 (209 aa).

Position 49–53 (arginine 49–glutamate 53) interacts with GTP. Residues cysteine 54, cysteine 65, and cysteine 67 each coordinate Zn(2+). Residues glutamine 70, glutamate 92–arginine 94, and threonine 114 contribute to the GTP site. Catalysis depends on aspartate 126, which acts as the Proton acceptor. Arginine 128 acts as the Nucleophile in catalysis. Residues threonine 149 and lysine 154 each contribute to the GTP site.

This sequence belongs to the GTP cyclohydrolase II family. It depends on Zn(2+) as a cofactor.

The catalysed reaction is GTP + 4 H2O = 2,5-diamino-6-hydroxy-4-(5-phosphoribosylamino)-pyrimidine + formate + 2 phosphate + 3 H(+). Its pathway is cofactor biosynthesis; riboflavin biosynthesis; 5-amino-6-(D-ribitylamino)uracil from GTP: step 1/4. Its function is as follows. Catalyzes the conversion of GTP to 2,5-diamino-6-ribosylamino-4(3H)-pyrimidinone 5'-phosphate (DARP), formate and pyrophosphate. This chain is GTP cyclohydrolase-2, found in Shewanella pealeana (strain ATCC 700345 / ANG-SQ1).